The primary structure comprises 118 residues: Fluoride-specific ion channel FluC 1 (118 aa).

4 consecutive transmembrane segments (helical) span residues 5 to 25, 39 to 59, 61 to 81, and 98 to 118; these read FLLV…ISIF, FFIN…ALGP, WQLF…TFKV, and YVGL…MLGV. Na(+)-binding residues include G71 and T74.

It belongs to the fluoride channel Fluc/FEX (TC 1.A.43) family.

The protein resides in the cell membrane. It catalyses the reaction fluoride(in) = fluoride(out). With respect to regulation, na(+) is not transported, but it plays an essential structural role and its presence is essential for fluoride channel function. Fluoride-specific ion channel. Important for reducing fluoride concentration in the cell, thus reducing its toxicity. In Listeria innocua serovar 6a (strain ATCC BAA-680 / CLIP 11262), this protein is Fluoride-specific ion channel FluC 1.